A 93-amino-acid polypeptide reads, in one-letter code: uncharacterized protein (93 aa).

The region spanning glutamine 24–phenylalanine 85 is the TRAM domain.

It belongs to the ycf81 family.

This is an uncharacterized protein from Thermus thermophilus.